A 514-amino-acid polypeptide reads, in one-letter code: ATP synthase subunit alpha (514 aa).

An ATP-binding site is contributed by 170 to 177 (GDRQIGKT).

This sequence belongs to the ATPase alpha/beta chains family. As to quaternary structure, F-type ATPases have 2 components, CF(1) - the catalytic core - and CF(0) - the membrane proton channel. CF(1) has five subunits: alpha(3), beta(3), gamma(1), delta(1), epsilon(1). CF(0) has three main subunits: a(1), b(2) and c(9-12). The alpha and beta chains form an alternating ring which encloses part of the gamma chain. CF(1) is attached to CF(0) by a central stalk formed by the gamma and epsilon chains, while a peripheral stalk is formed by the delta and b chains.

The protein localises to the cell inner membrane. It carries out the reaction ATP + H2O + 4 H(+)(in) = ADP + phosphate + 5 H(+)(out). In terms of biological role, produces ATP from ADP in the presence of a proton gradient across the membrane. The alpha chain is a regulatory subunit. The sequence is that of ATP synthase subunit alpha from Pseudomonas entomophila (strain L48).